A 534-amino-acid polypeptide reads, in one-letter code: Thromboxane-A synthase (534 aa).

Topologically, residues Met-1–Glu-10 are cytoplasmic. The chain crosses the membrane as a helical span at residues Leu-11–Tyr-31. Topologically, residues Ser-32 to Gly-75 are lumenal. A helical transmembrane segment spans residues Pro-76–Ile-96. The Cytoplasmic segment spans residues Lys-97–Arg-223. A helical membrane pass occupies residues Leu-224–Pro-244. Over Asn-245–Ala-336 the chain is Lumenal. The chain crosses the membrane as a helical span at residues Phe-337–Leu-357. Residues Leu-358–Arg-534 lie on the Cytoplasmic side of the membrane. Cys-480 serves as a coordination point for heme.

This sequence belongs to the cytochrome P450 family. In terms of assembly, monomer. It depends on heme as a cofactor. In terms of tissue distribution, expressed in lung, kidney and thymus.

Its subcellular location is the endoplasmic reticulum membrane. It carries out the reaction prostaglandin H2 = thromboxane A2. The enzyme catalyses prostaglandin H2 = (12S)-hydroxy-(5Z,8E,10E)-heptadecatrienoate + malonaldehyde. It catalyses the reaction a hydroperoxyeicosatetraenoate = an oxoeicosatetraenoate + H2O. The catalysed reaction is (15S)-hydroperoxy-(5Z,8Z,11Z,13E)-eicosatetraenoate = 15-oxo-(5Z,8Z,11Z,13E)-eicosatetraenoate + H2O. It carries out the reaction (15S)-hydroperoxy-(5Z,8Z,11Z,13E)-eicosatetraenoate + AH2 = (15S)-hydroxy-(5Z,8Z,11Z,13E)-eicosatetraenoate + A + H2O. Its function is as follows. Catalyzes the conversion of prostaglandin H2 (PGH2) to thromboxane A2 (TXA2), a potent inducer of blood vessel constriction and platelet aggregation. Also cleaves PGH2 to 12-hydroxy-heptadecatrienoicacid (12-HHT) and malondialdehyde, which is known to act as a mediator of DNA damage. 12-HHT and malondialdehyde are formed stoichiometrically in the same amounts as TXA2. Additionally, displays dehydratase activity, toward (15S)-hydroperoxy-(5Z,8Z,11Z,13E)-eicosatetraenoate (15(S)-HPETE) producing 15-KETE and 15-HETE. In Sus scrofa (Pig), this protein is Thromboxane-A synthase (TBXAS1).